A 418-amino-acid chain; its full sequence is MTLLALGINHKTAPVSLRERVVFSQDKLGVALDSLLQQPLVQGGVVLSTCNRTELYLSVDEQENQREQLIRWLCEYHQLRPEEVNSSLYWHQGNAAVSHLMRVASGLDSLVLGEPQILGQVKKAFAESQRGHSLSSELERLFQKSFTVAKRVRTETDIGASAVSVAFAACTLARQIFESLADVTVLLVGAGETIELVARYLRDHNVQKMVIANRTRERAQALATEVGAEVITLAELDEQLVHADIVISSTASTLPIIGKGMMERTLKARRNQPMLMVDIAVPRDIEPEVGKLPNVYLYSVDDLHAIIQHNLAQRKAAAVQAESIVQQESSDFMAWLRAQSAVETIRDYRAQADELRAEMTAKALAAIQQGNDVEAVIQELTHRLTNRLIHAPTKSLQQAARDGDQNRLQILRDSLGLD.

Substrate contacts are provided by residues 49–52 (TCNR), S109, 114–116 (EPQ), and Q120. The active-site Nucleophile is the C50. 189–194 (GAGETI) contacts NADP(+).

This sequence belongs to the glutamyl-tRNA reductase family. In terms of assembly, homodimer.

It catalyses the reaction (S)-4-amino-5-oxopentanoate + tRNA(Glu) + NADP(+) = L-glutamyl-tRNA(Glu) + NADPH + H(+). The protein operates within porphyrin-containing compound metabolism; protoporphyrin-IX biosynthesis; 5-aminolevulinate from L-glutamyl-tRNA(Glu): step 1/2. Its function is as follows. Catalyzes the NADPH-dependent reduction of glutamyl-tRNA(Glu) to glutamate 1-semialdehyde (GSA). The sequence is that of Glutamyl-tRNA reductase from Pectobacterium atrosepticum (strain SCRI 1043 / ATCC BAA-672) (Erwinia carotovora subsp. atroseptica).